Consider the following 600-residue polypeptide: Aspartate--tRNA(Asp/Asn) ligase (600 aa).

Position 174 (Glu174) interacts with L-aspartate. Positions 198-201 (QLFK) are aspartate. Arg220 lines the L-aspartate pocket. Residues 220-222 (RDE) and Gln229 contribute to the ATP site. Residue His457 coordinates L-aspartate. Glu491 serves as a coordination point for ATP. An L-aspartate-binding site is contributed by Arg498. 543–546 (GLDR) lines the ATP pocket.

It belongs to the class-II aminoacyl-tRNA synthetase family. Type 1 subfamily. As to quaternary structure, homodimer.

It is found in the cytoplasm. The catalysed reaction is tRNA(Asx) + L-aspartate + ATP = L-aspartyl-tRNA(Asx) + AMP + diphosphate. In terms of biological role, aspartyl-tRNA synthetase with relaxed tRNA specificity since it is able to aspartylate not only its cognate tRNA(Asp) but also tRNA(Asn). Reaction proceeds in two steps: L-aspartate is first activated by ATP to form Asp-AMP and then transferred to the acceptor end of tRNA(Asp/Asn). In Burkholderia lata (strain ATCC 17760 / DSM 23089 / LMG 22485 / NCIMB 9086 / R18194 / 383), this protein is Aspartate--tRNA(Asp/Asn) ligase.